A 254-amino-acid chain; its full sequence is Probable phosphatase Shew185_1467 (254 aa).

9 residues coordinate Zn(2+): H8, H10, H16, H41, E74, H102, H132, D193, and H195.

Belongs to the PHP family. Requires Zn(2+) as cofactor.

This Shewanella baltica (strain OS185) protein is Probable phosphatase Shew185_1467.